A 138-amino-acid polypeptide reads, in one-letter code: Large ribosomal subunit protein uL16 (138 aa).

A compositionally biased stretch (basic residues) spans 1–17 (MLIPRRVKHRKQHHPTR). A disordered region spans residues 1-24 (MLIPRRVKHRKQHHPTRRGAASGG).

It belongs to the universal ribosomal protein uL16 family. Part of the 50S ribosomal subunit.

Its function is as follows. Binds 23S rRNA and is also seen to make contacts with the A and possibly P site tRNAs. In Kineococcus radiotolerans (strain ATCC BAA-149 / DSM 14245 / SRS30216), this protein is Large ribosomal subunit protein uL16.